A 169-amino-acid polypeptide reads, in one-letter code: Co-chaperone protein HscB homolog (169 aa).

The region spanning 2–74 is the J domain; that stretch reads NYFDLFSLPV…CLRAQYLLLL (73 aa).

It belongs to the HscB family. Interacts with HscA and stimulates its ATPase activity.

Functionally, co-chaperone involved in the maturation of iron-sulfur cluster-containing proteins. Seems to help targeting proteins to be folded toward HscA. The chain is Co-chaperone protein HscB homolog from Psychromonas ingrahamii (strain DSM 17664 / CCUG 51855 / 37).